The chain runs to 89 residues: Small membrane A-kinase anchor protein (89 aa).

A disordered region spans residues 1–29; that stretch reads MGCMKSKRRDPTQNSDSSEKVDGKPGKHG. Gly2 carries the N-myristoyl glycine lipid modification. Basic and acidic residues predominate over residues 17–29; the sequence is SSEKVDGKPGKHG.

This sequence belongs to the small membrane AKAP family. In terms of processing, may be palmitoylated at Cys-3.

Its subcellular location is the cell membrane. Its function is as follows. Binds to type I regulatory subunits of protein kinase A and may anchor/target them to the plasma membrane. This is Small membrane A-kinase anchor protein from Danio rerio (Zebrafish).